The primary structure comprises 393 residues: Phosphoenolpyruvate/phosphate translocator 3, chloroplastic (393 aa).

The transit peptide at 1 to 65 directs the protein to the chloroplast; the sequence is MQRAAAASRA…LSGGRAVTAR (65 aa). 7 helical membrane-spanning segments follow: residues 89-109, 124-144, 164-183, 195-217, 232-249, 270-290, and 362-382; these read LAET…NIYF, YTIT…MWAL, AAGH…KVAV, FFTV…LGSL, LSFN…NLLY, INLF…LMLF, and TPIS…VFLY. The 106-residue stretch at 123–228 folds into the EamA domain; that stretch reads PYTITAFQLA…PIVGGVALAS (106 aa).

It belongs to the TPT transporter family. PPT (TC 2.A.7.9) subfamily.

The protein resides in the plastid. It is found in the chloroplast membrane. In terms of biological role, phosphoenolpyruvate/phosphate translocator that transports phosphoenolpyruvate (PEP) and dihydroxyacetone phosphate. The chain is Phosphoenolpyruvate/phosphate translocator 3, chloroplastic (PPT3) from Oryza sativa subsp. japonica (Rice).